A 493-amino-acid chain; its full sequence is Inosine-5'-monophosphate dehydrogenase (493 aa).

CBS domains lie at 97–155 (VIID…NAPI) and 159–219 (MTSE…AKDE). Residues Asp253 and 303–305 (GIG) contribute to the NAD(+) site. K(+) contacts are provided by Gly305 and Gly307. Residue Ser308 coordinates IMP. K(+) is bound at residue Cys310. Cys310 acts as the Thioimidate intermediate in catalysis. IMP-binding positions include 343–345 (DGG), 366–367 (GS), and 390–394 (YRGMG). The active-site Proton acceptor is the Arg406. Glu421 contacts IMP. The K(+) site is built by Glu475, Ser476, and His477.

The protein belongs to the IMPDH/GMPR family. As to quaternary structure, homotetramer. It depends on K(+) as a cofactor.

It carries out the reaction IMP + NAD(+) + H2O = XMP + NADH + H(+). It participates in purine metabolism; XMP biosynthesis via de novo pathway; XMP from IMP: step 1/1. Mycophenolic acid (MPA) is a non-competitive inhibitor that prevents formation of the closed enzyme conformation by binding to the same site as the amobile flap. In contrast, mizoribine monophosphate (MZP) is a competitive inhibitor that induces the closed conformation. MPA is a potent inhibitor of mammalian IMPDHs but a poor inhibitor of the bacterial enzymes. MZP is a more potent inhibitor of bacterial IMPDH. Catalyzes the conversion of inosine 5'-phosphate (IMP) to xanthosine 5'-phosphate (XMP), the first committed and rate-limiting step in the de novo synthesis of guanine nucleotides, and therefore plays an important role in the regulation of cell growth. The sequence is that of Inosine-5'-monophosphate dehydrogenase from Streptococcus pyogenes serotype M3 (strain ATCC BAA-595 / MGAS315).